An 89-amino-acid polypeptide reads, in one-letter code: Small ribosomal subunit protein bS20 (89 aa).

Residues 1–12 (MANIKSAKKRVK) show a composition bias toward basic residues. Residues 1–20 (MANIKSAKKRVKQTVVRNER) are disordered.

This sequence belongs to the bacterial ribosomal protein bS20 family.

Functionally, binds directly to 16S ribosomal RNA. The polypeptide is Small ribosomal subunit protein bS20 (Xylella fastidiosa (strain 9a5c)).